Here is a 1687-residue protein sequence, read N- to C-terminus: MSSSQNLGGATRCGRVIGPSLDKIIKNAAWRKHTFLVSACKSVLDKLEALSDSPDPSSPLFGLTTSDADAVLQPLLLSLDTGYAKVIEPALDCSFKLFSLSLLRGEVCSSSPDSLLYKLIHAICKVCGIGEESIELAVLRVLLAAVRSPRILIRGDCLLHLVRTCYNVYLGGFNGTNQICAKSVLAQIMLIVFTRSEANSMDASLKTVNVNDLLAITDKNVNEGNSVHICQGFINDVITAGEAAPPPDFALVQPPEEGASSTEDEGTGSKIREDGFLLFKNLCKLSMKFSSQENTDDQILVRGKTLSLELLKVIIDNGGPIWLSDERFLNAIKQLLCLSLLKNSALSVMSIFQLQCAIFTTLLRKYRSGMKSEVGIFFPMLVLRVLENVLQPSFVQKMTVLSLLENICHDPNLIIDIFVNFDCDVESPNIFERIVNGLLKTALGPPPGSSTILSPVQDITFRHESVKCLVSIIKAMGTWMDQQLSVGDSLLPKSLENEAPANNHSNSNEEDGTTIDHDFHPDLNPESSDAATLEQRRAYKIERQKGVTLFNRKPSKGIEFLISSKKVGNSPDEVVSFLRNTTGLNATMIGDYLGEREDFPMKVMHAYVDSFDFKEMNFGEAIRFFLRGFRLPGEAQKIDRIMEKFAERFCKCNPNSFSSADTAYVLAYSVIMLNTDAHNIMVKEKMTKADFIRNNRGIDDGKDLPEEYLGALYDQVVINEIKMSSDSSAPESRQSNGLNKLLGLDGILNLVYWTQTEEKAVGANGLLIKDIQEKFRSKSGKSESAYHVVTDVAILRFMVEVSWGPMLAAFSVTLDQSDDRLAAVECLRGFRYAVHVTAVMGMQTQRDAFVTSMAKFTNLHCAGDMKQKNVDAVKAIISIAIEDGNHLQDAWEHILTCLSRIEHLQLLGEGAPSDASYFASTETEEKKALGFPNLKKKGALQNPVMMAVVRGGSYDSSTIGPNMPGLVKQDQINNFIANLNLLDQIGSFQLNNVYAHSQRLKTEAIVAFVKALCKVSMSELQSPTDPRVFSLTKLVEIAHYNMNRIRLVWSRIWSILSDFFVSVGLSENLSVAIFVMDSLRQLSMKFLEREELANYNFQNEFLRPFVIVMQKSSSAEIRELIVRCISQMVLSRVSNVKSGWKSVFKVFTTAAADERKNIVLLAFETMEKIVREYFSYITETEATTFTDCVRCLITFTNSTFTSDVSLNAIAFLRFCALKLADGGLVWNEKGRSSSPSTPVTDDHSPSTQNFMDADENISYWVPLLTGLSKLTSDSRSAIRKSSLEVLFNILKDHGHIFSRTFWIGVFSSVIYPIFNSVWGENDLLSKDEHSSFPSTFSSHPSEVSWDAETSAMAAQYLVDLFVSFFTVIRSQLSSVVSLLAGLIRSPAQGPTVAGVGALLRLADELGDRFSENEWKEIFLAVNEAASLTLSSFMKTLRTMDDIPDEDTLSDQDFSNEDDIDEDSLQTMSYVVARTKSHITVQLQVVQVVTDLYRIHQQSLLASHVTVILEILSSISSHAHQLNSDLILQKKVRRACSILELSEPPMLHFENDTFQNYLDILQAIVTNNPGVSLELNVESQLMTVCMQILKMYLKCTLFQGDELEETRQPKNWILPMGAASKEEAAARSPLVVAVLKALRELKRDSFKRYAPNFFPLLVELVRSEHSSSQVPQVLSTVFHTCMGAMMDE.

The interval 494 to 529 is disordered; that stretch reads SLENEAPANNHSNSNEEDGTTIDHDFHPDLNPESSD. Residues 514 to 523 are compositionally biased toward basic and acidic residues; that stretch reads TIDHDFHPDL. The region spanning 532-719 is the SEC7 domain; that stretch reads TLEQRRAYKI…GALYDQVVIN (188 aa). Glu634 is a catalytic residue. A disordered region spans residues 1229 to 1248; it reads KGRSSSPSTPVTDDHSPSTQ. Positions 1232–1248 are enriched in polar residues; it reads SSSPSTPVTDDHSPSTQ.

Homodimer.

The protein resides in the cytoplasm. It is found in the cytosol. The protein localises to the membrane. With respect to regulation, inhibited by brefeldin A. Its function is as follows. Activates the ARF proteins by exchanging bound GDP for free GTP. Plays a role in vesicular protein sorting. The protein is Brefeldin A-inhibited guanine nucleotide-exchange protein 1 (BIG1) of Arabidopsis thaliana (Mouse-ear cress).